A 1203-amino-acid chain; its full sequence is DNA-directed RNA polymerase subunit beta' (1203 aa).

Positions 60, 62, 75, and 78 each coordinate Zn(2+). Mg(2+) contacts are provided by Asp-449, Asp-451, and Asp-453. 4 residues coordinate Zn(2+): Cys-818, Cys-892, Cys-899, and Cys-902.

Belongs to the RNA polymerase beta' chain family. As to quaternary structure, the RNAP catalytic core consists of 2 alpha, 1 beta, 1 beta' and 1 omega subunit. When a sigma factor is associated with the core the holoenzyme is formed, which can initiate transcription. Mg(2+) is required as a cofactor. It depends on Zn(2+) as a cofactor.

It catalyses the reaction RNA(n) + a ribonucleoside 5'-triphosphate = RNA(n+1) + diphosphate. Its function is as follows. DNA-dependent RNA polymerase catalyzes the transcription of DNA into RNA using the four ribonucleoside triphosphates as substrates. In Bacillus mycoides (strain KBAB4) (Bacillus weihenstephanensis), this protein is DNA-directed RNA polymerase subunit beta'.